Reading from the N-terminus, the 430-residue chain is Septin-14 (430 aa).

In terms of domain architecture, Septin-type G spans 48–313; the sequence is KGFSFNILCV…ECYRSNRLQK (266 aa). The tract at residues 58–65 is G1 motif; sequence GETGIGKT. GTP-binding positions include 58–65, glycine 113, 194–202, glycine 246, and arginine 261; these read GETGIGKT and KADSLSKND. The G3 motif stretch occupies residues 110–113; sequence KTVG. Residues 193–196 form a G4 motif region; that stretch reads AKAD. A coiled-coil region spans residues 329 to 410; the sequence is QEMYEAKRRE…IIDFYKMKAA (82 aa). Residues 367–430 are required for interaction with SEPTIN4. Required for migration of cortical neurons during corticogenesis; sequence DAEKELQDKF…NIKKDKDRKK (64 aa).

This sequence belongs to the TRAFAC class TrmE-Era-EngA-EngB-Septin-like GTPase superfamily. Septin GTPase family. As to quaternary structure, septins polymerize into heterooligomeric protein complexes that form filaments, and can associate with cellular membranes, actin filaments and microtubules. GTPase activity is required for filament formation. Interacts with ACTN4. Interacts with SEPTIN9. Interacts (via C-terminus) with SEPTIN4. Expressed in the testis and brain including the cerebrum, hippocampus and cerebellum (at protein level).

Its subcellular location is the cytoplasm. It is found in the cytoskeleton. The protein localises to the cell projection. The protein resides in the axon. It localises to the dendrite. Its subcellular location is the perikaryon. It is found in the perinuclear region. The protein localises to the cytoplasmic vesicle. The protein resides in the secretory vesicle. It localises to the acrosome. Filament-forming cytoskeletal GTPase. Involved in the migration of cortical neurons and the formation of neuron leading processes during embryonic development. Plays a role in sperm head formation during spermiogenesis, potentially via facilitating localization of ACTN4 to cell filaments. In Mus musculus (Mouse), this protein is Septin-14.